The primary structure comprises 506 residues: Maturase K (506 aa).

The protein belongs to the intron maturase 2 family. MatK subfamily.

The protein localises to the plastid. It localises to the chloroplast. Its function is as follows. Usually encoded in the trnK tRNA gene intron. Probably assists in splicing its own and other chloroplast group II introns. This Gaultheria procumbens (Wintergreen) protein is Maturase K.